Consider the following 125-residue polypeptide: Large ribosomal subunit protein bL12 (125 aa).

It belongs to the bacterial ribosomal protein bL12 family. As to quaternary structure, homodimer. Part of the ribosomal stalk of the 50S ribosomal subunit. Forms a multimeric L10(L12)X complex, where L10 forms an elongated spine to which 2 to 4 L12 dimers bind in a sequential fashion. Binds GTP-bound translation factors.

Forms part of the ribosomal stalk which helps the ribosome interact with GTP-bound translation factors. Is thus essential for accurate translation. In Helicobacter acinonychis (strain Sheeba), this protein is Large ribosomal subunit protein bL12.